The primary structure comprises 140 residues: Nucleoside diphosphate kinase (140 aa).

The ATP site is built by K11, F59, R87, T93, R104, and N114. H117 serves as the catalytic Pros-phosphohistidine intermediate.

Belongs to the NDK family. As to quaternary structure, homotetramer. Requires Mg(2+) as cofactor.

It localises to the cytoplasm. The catalysed reaction is a 2'-deoxyribonucleoside 5'-diphosphate + ATP = a 2'-deoxyribonucleoside 5'-triphosphate + ADP. The enzyme catalyses a ribonucleoside 5'-diphosphate + ATP = a ribonucleoside 5'-triphosphate + ADP. Its function is as follows. Major role in the synthesis of nucleoside triphosphates other than ATP. The ATP gamma phosphate is transferred to the NDP beta phosphate via a ping-pong mechanism, using a phosphorylated active-site intermediate. This chain is Nucleoside diphosphate kinase, found in Rickettsia prowazekii (strain Madrid E).